A 245-amino-acid polypeptide reads, in one-letter code: tRNA1(Val) (adenine(37)-N6)-methyltransferase (245 aa).

It belongs to the methyltransferase superfamily. tRNA (adenine-N(6)-)-methyltransferase family.

Its subcellular location is the cytoplasm. It carries out the reaction adenosine(37) in tRNA1(Val) + S-adenosyl-L-methionine = N(6)-methyladenosine(37) in tRNA1(Val) + S-adenosyl-L-homocysteine + H(+). Specifically methylates the adenine in position 37 of tRNA(1)(Val) (anticodon cmo5UAC). This is tRNA1(Val) (adenine(37)-N6)-methyltransferase from Salmonella paratyphi C (strain RKS4594).